The sequence spans 423 residues: Glutamate-1-semialdehyde 2,1-aminomutase (423 aa).

N6-(pyridoxal phosphate)lysine is present on Lys259.

Belongs to the class-III pyridoxal-phosphate-dependent aminotransferase family. HemL subfamily. Homodimer. It depends on pyridoxal 5'-phosphate as a cofactor.

The protein resides in the cytoplasm. It carries out the reaction (S)-4-amino-5-oxopentanoate = 5-aminolevulinate. It participates in porphyrin-containing compound metabolism; protoporphyrin-IX biosynthesis; 5-aminolevulinate from L-glutamyl-tRNA(Glu): step 2/2. The polypeptide is Glutamate-1-semialdehyde 2,1-aminomutase (Thermosipho africanus (strain TCF52B)).